The primary structure comprises 316 residues: 4-hydroxy-3-methylbut-2-enyl diphosphate reductase (316 aa).

A [4Fe-4S] cluster-binding site is contributed by Cys12. (2E)-4-hydroxy-3-methylbut-2-enyl diphosphate-binding residues include His41 and His74. 2 residues coordinate dimethylallyl diphosphate: His41 and His74. 2 residues coordinate isopentenyl diphosphate: His41 and His74. Cys96 contributes to the [4Fe-4S] cluster binding site. Position 124 (His124) interacts with (2E)-4-hydroxy-3-methylbut-2-enyl diphosphate. His124 lines the dimethylallyl diphosphate pocket. Residue His124 participates in isopentenyl diphosphate binding. Glu126 functions as the Proton donor in the catalytic mechanism. A (2E)-4-hydroxy-3-methylbut-2-enyl diphosphate-binding site is contributed by Thr167. Residue Cys197 coordinates [4Fe-4S] cluster. (2E)-4-hydroxy-3-methylbut-2-enyl diphosphate-binding residues include Ser225, Ser226, Asn227, and Ser269. Dimethylallyl diphosphate is bound by residues Ser225, Ser226, Asn227, and Ser269. Residues Ser225, Ser226, Asn227, and Ser269 each coordinate isopentenyl diphosphate.

This sequence belongs to the IspH family. As to quaternary structure, homodimer. [4Fe-4S] cluster serves as cofactor.

It carries out the reaction isopentenyl diphosphate + 2 oxidized [2Fe-2S]-[ferredoxin] + H2O = (2E)-4-hydroxy-3-methylbut-2-enyl diphosphate + 2 reduced [2Fe-2S]-[ferredoxin] + 2 H(+). The enzyme catalyses dimethylallyl diphosphate + 2 oxidized [2Fe-2S]-[ferredoxin] + H2O = (2E)-4-hydroxy-3-methylbut-2-enyl diphosphate + 2 reduced [2Fe-2S]-[ferredoxin] + 2 H(+). It participates in isoprenoid biosynthesis; dimethylallyl diphosphate biosynthesis; dimethylallyl diphosphate from (2E)-4-hydroxy-3-methylbutenyl diphosphate: step 1/1. It functions in the pathway isoprenoid biosynthesis; isopentenyl diphosphate biosynthesis via DXP pathway; isopentenyl diphosphate from 1-deoxy-D-xylulose 5-phosphate: step 6/6. Functionally, catalyzes the conversion of 1-hydroxy-2-methyl-2-(E)-butenyl 4-diphosphate (HMBPP) into a mixture of isopentenyl diphosphate (IPP) and dimethylallyl diphosphate (DMAPP). Acts in the terminal step of the DOXP/MEP pathway for isoprenoid precursor biosynthesis. The sequence is that of 4-hydroxy-3-methylbut-2-enyl diphosphate reductase from Pectobacterium carotovorum subsp. carotovorum (strain PC1).